The chain runs to 106 residues: Transcription and mRNA export factor SUS1 (106 aa).

This sequence belongs to the ENY2 family. Component of the nuclear pore complex (NPC)-associated TREX-2 complex (transcription and export complex 2), composed of at least SUS1, SAC3, THP1, SEM1, and CDC31. TREX-2 contains 2 SUS1 chains. The TREX-2 complex interacts with the nucleoporin NUP1. Component of the 1.8 MDa SAGA transcription coactivator-HAT complex. SAGA is built of 5 distinct domains with specialized functions. Within the SAGA complex, SUS1, SGF11, SGF73 and UBP8 form an additional subcomplex of SAGA called the DUB module (deubiquitination module). Interacts directly with THP1, SAC3, SGF11, and with the RNA polymerase II.

It localises to the nucleus. It is found in the nucleoplasm. The protein resides in the cytoplasm. The protein localises to the P-body. Its function is as follows. Involved in mRNA export coupled transcription activation by association with both the TREX-2 and the SAGA complexes. At the promoters, SAGA is required for recruitment of the basal transcription machinery. It influences RNA polymerase II transcriptional activity through different activities such as TBP interaction and promoter selectivity, interaction with transcription activators, and chromatin modification through histone acetylation and deubiquitination. Within the SAGA complex, participates in a subcomplex required for deubiquitination of H2B and for the maintenance of steady-state H3 methylation levels. The TREX-2 complex functions in docking export-competent ribonucleoprotein particles (mRNPs) to the nuclear entrance of the nuclear pore complex (nuclear basket). TREX-2 participates in mRNA export and accurate chromatin positioning in the nucleus by tethering genes to the nuclear periphery. May also be involved in cytoplasmic mRNA decay by interaction with components of P-bodies. This chain is Transcription and mRNA export factor SUS1, found in Mycosarcoma maydis (Corn smut fungus).